The following is a 453-amino-acid chain: MNRRRERVVVVGAGLAGSLVALYLARQGHEVDVFERRPDPRSALGRPEGRSINLGLSARGMRALDGVGLLADVLKHSVPMRDRVVHSPDGGIRTQPYGVREHEILHSVLREELISLVVTAAEAEPGVRFHFDSLLASLDRETGTVDVAPTAGGETRTVTADLIVGADGAFSTIRQQMQHGLRANYAQEFLPWGYKELTIPVDADGQPRVRLEALHVWPGHEAMMIAHPNRDGSLTCTLFMAHEGPVSFAALDTPTAVRDFFRQRFPDAEELMPDLVREVTEHPVGHLVTVRSDPWRYADRVVLIGDAAHAVYPFYGQGMNSAFEDCVVLDECLTAHPDRATALAAYEAARKPHTDVLADLSTANFEDLRDRVHRLGYSASAAADRLLARLLPQHWVPLYGMVAHTTIPYADALARAKRQDRILRQAGAGLALVTVLAATAALRAGRRRRANRR.

Belongs to the aromatic-ring hydroxylase family. KMO subfamily. It depends on FAD as a cofactor.

The enzyme catalyses L-kynurenine + NADPH + O2 + H(+) = 3-hydroxy-L-kynurenine + NADP(+) + H2O. Its pathway is cofactor biosynthesis; NAD(+) biosynthesis; quinolinate from L-kynurenine: step 1/3. In terms of biological role, catalyzes the hydroxylation of L-kynurenine (L-Kyn) to form 3-hydroxy-L-kynurenine (L-3OHKyn). Required for synthesis of quinolinic acid. This chain is Kynurenine 3-monooxygenase, found in Salinispora tropica (strain ATCC BAA-916 / DSM 44818 / JCM 13857 / NBRC 105044 / CNB-440).